A 129-amino-acid chain; its full sequence is Small ribosomal subunit protein uS11 (129 aa).

Belongs to the universal ribosomal protein uS11 family. In terms of assembly, part of the 30S ribosomal subunit. Interacts with proteins S7 and S18. Binds to IF-3.

Its function is as follows. Located on the platform of the 30S subunit, it bridges several disparate RNA helices of the 16S rRNA. Forms part of the Shine-Dalgarno cleft in the 70S ribosome. This is Small ribosomal subunit protein uS11 from Hyphomonas neptunium (strain ATCC 15444).